The chain runs to 762 residues: Mitochondrial intermediate peptidase (762 aa).

A mitochondrion-targeting transit peptide spans 1-28; it reads MQVRTLLTLGKKKVIGNRQCILSLYRKY. His-544 contacts Zn(2+). Glu-545 is a catalytic residue. The Zn(2+) site is built by His-548 and His-551.

It belongs to the peptidase M3 family. Zn(2+) serves as cofactor.

It is found in the mitochondrion matrix. It carries out the reaction Release of an N-terminal octapeptide as second stage of processing of some proteins imported into the mitochondrion.. Functionally, cleaves proteins, imported into the mitochondrion, to their mature size. While most mitochondrial precursor proteins are processed to the mature form in one step by mitochondrial processing peptidase (MPP), the sequential cleavage by MIP of an octapeptide after initial processing by MPP is a required step for a subgroup of nuclear-encoded precursor proteins destined for the matrix or the inner membrane. This is Mitochondrial intermediate peptidase (oct1) from Schizosaccharomyces pombe (strain 972 / ATCC 24843) (Fission yeast).